The chain runs to 5634 residues: MIAQEVVHTVFLVALFRSSLAGDGTPQSESRAEEIPEGASTLAFVFDVTGSMYDDLVQVIEGASKILETSLKRPKRPLYNFALVPFHDPEIGPVTITTDPKKFQYELRELYVQGGGDCPEMSIGAIKIALEISLPGSFIYVFTDARSKDYRLTHEVLQLIQQKQSQVVFVLTGDCDDRNHIGYKVYEEIASTSSGQVFHLDKKQVNEVLKWVEEAVQASKVHLLSTDHLEHAVNTWKIPFDPSLKEVTVSLSGPSPVIEIRNPFGKLIKKGFGLNELLNIHNSAKVVNVKEPEAGMWTVKTSSSGRHSVRITGLSTIDFRAGFSRKPTLDFKKTMSRPVQGIPTYVLLNTSGISSPARVDRLELLSISGGSLKTIPVKHYPDRKPYGIWNISDFIPPDEAFFLKVTGYDKDGYLFQRVSSVSFSSIVPDAPKVTMPTRTLGYYLQPGQILCSVESFLPFTLSFMRDGIALGVDQYLRESASVNWDFTKVTLSDEGFYDCIAVSSAGTGRAQTFFDVSEPPPIIQLPNNVTVTPGERAVLACLVISAVDYNLTWQRSGRDIRLADSARIRTLANLSLELRSVKIGDAGEYRCVVSSEGGSAAASVFLTVQEKPKVTVMPKNQSFTGGSEISIMCSATGYPKPKIVWTMNEMFIMGSHRYRMTSEGTLFIKNAVPKDAGTYACLASNAAGTDKQTSTLRYIEAPKLVVEQSELLVALGDTTVMECKTSGIPPPQVKWFKGDLELRPSTFLSIDPLVGLLKIQETQDLDAGDYTCVAINEAGRATGRLTLDVGSPPVFIQEPSDVAVEIGSNVTLPCYVQGYPEPKIKWRRLDNMPVFSRPFSVSFISQLRTGALFISNLWASDKGTYICEAENQFGKIQSQTTVTVTGLVAPLIGISPSMASVIEGQPLTLPCTLLAGNPIPERRWMKNSAMLVQNPYITVRSDGSLHIERVRLQDGGKYTCVASNVAGTNNKTTSVAVHVLPSIQHGQQILSTIEGVPVTLPCRASGIPKPSITWSKKGELISTSSAKFSAGADGSLYVVSPGSEESGEYICTATNAAGYAKRKVQLTVYVRPRVFGDQRGLSQDKPVEISVLAGEEAILPCEAKSLPPPIITWAKDSQLISPFSPRHTFLPSGSMKITETRVSDSGMYLCVATNIAGNVTQSVKLSVHVPPKIQHGNRHIKVQVGQRVDILCNAHGSPPPVITWFKSGRPFLDGAQHPGSPDGTLSIEQAVISDAGVYTCAATNIAGSDEAEVTLHVQEPPSVEDLQPPFNTPFQERLANQRIEFPCPAKGTPKPTIKWLHNGREVTGQEPGVSILEDGALLVIASVTPHNNGEYICVAVNEAGTTERKYNLKVHVPPVIRDKEHVTNVSVLTSQLASLYCEVEGTPSPVITWYKDDIQVTESSTVQIVNNGKILKLFKVSAEDAGRYSCKAINIAGTSQKDFSVNVLVPPSILGASSPSEVSVVLNHNVTLQCPGTGVPFPAIHWFKDGKPLFLGDPNIELSDRGQSLHLRNARRSDKGRYQCTVSNAAGKQAKDIKLTVYVPPSIKGGNITTEISALLNSIVKLECETRGLPVPAITWYKDGQVVTSSSQALYIDKGQLLHIQRAQVSDSATYTCHAANVAGTAEKSFHVDIYVPPTIEGDLTAPSNKQVIIGQSLILECKAAGNPPPILTWLKDGVPVKASDNIHIEAGGKKLEILSALEVDRGQYICVATSVAGEREIKYEVDVLVPPAVEGGEETSYFIVLANNLLELDCQVSGSPPPTIMWLKGGQLIDERDGFKILLNGRKLVIAQAQVSDTGLYQCVATNIAGDHRKEFEVTVHVPPTIKSSDLPEKTVVRYKPVTLQCIANGIPNPSITWLKDDQPVNTAHGNLKIQSSGRVLQIAKALLEDAGRYTCVATNAAGEAHQHTQLHVHEPPSLDDAGKMRNETVVVNNPIQLECKATGKPLPVITWYKDSHPLSGSASAAFLKRGQVLEIGSAQISDAGIYKCVAINSAGATELFYSLQVHVPPSISGSSSMVEVVVNNLARLECEARGIPAPSLTWLKDGSPVSSFSNGIQILSGGRILALTSAQMSDAGRYTCVAVNAAGEKQRDIDLRVYAPPNIMGEEQNVSVLIGQAVELFCQSDAVPPPTLMWLKDGRPLLKRPGLSISENGSVLKIEDAQAGDTGRYTCEATNVAGKTEKNYNVNVWVPPSIYGSDELVQLTAIEGNLITLLCESSGIPPPDLTWKKKGSLVLADSAGRVHILSGGRRLQISIAEKADAGLYTCVASNVAGVAKKEYNLQVYIRPSITNSGGHRPEITVIRGKSISLECEVQGIPQPTVTWMKDGRPLTKGKGVEILDEGRILQLKNVHVSDTGRYVCVAVNVAGMTDKRYDLSVHAPPSIIGNHGVPENVSVVEKSSVSLTCEASGIPLPSITWLKDGWPVNLGSSVKILSGGRMLRLMQTRPEDAGQYTCIVRNAAGEDRKMFGLSVLVPPHIVGENTLEDVKIKEKQSVTLTCEVRGNPVPQITWHKDGQLLQEDEAHHMMSGGRFLQITNAQVSHTGRYTCLASNIAGDKSKSFRLNVFVSPTIAGVDSDGSPEDVIVILNSPTSLVCEAYSYPPATITWFKDGTPLESNRNIRILPGGRTLQILNAQEDNAGRYSCVATNEAGEKIKHYEVKVYIPPIIKKGDLLGPGLSPKEVKIRVNSSLTLECEAYAIPSASLRWYKDGQPLKSDDHVTIAASGHTLQIKEAQISDTGRYTCVASNLAGEDELDFDVNIQVPPSFQKLWEIGNMLDTGRSGEAKDVIINNPLSLHCETNAAPPPTLTWYKDGRPLTSSDRVLILPGGRVLQIPRAKVEDAGRYTCVAVNEAGEDSLRYDVHVLLPPVIKGANSDLPEEVTVLVNKSTQMECSSSGNPAPRNYWQKDGQILLEDEHHKFQSDGRSLQILNAQITDTGRYVCVAENTAGSAKKYFNLNVHVPPSVIGPNHEHLSVVVNHFISLNCEVSGFPPPDLSWLKNEEPIKPNTNVLTVPGGRTLQIIRAKISDGGDYTCIAINQAGESKKKVSLTVHVPPSIKDHGSQSLSIVNVREGTSVSLECESNAVPPPVITWSKNGRMIPDSTNVEILTGGQTLHIRRAEVSDTGQYVCRAINVAGRDDKNFHLNVYVPPTIEGPETEVIVETISNPVTLTCDATGIPPPTITWLKNHKPIENSDPLEVHILSGGSKLQIARPQRSNSGNYTCVASNMEGKAQKNFILFIQVPPSVAGAEVPSEVSVLLGENVELVCNADGIPTPHLQWLRDGKPIVNGETERVRVTTDGSTLNIYRALTSDMGKYTCVATNPAGEEDRIFNLNVYVPPKIRGNKEEAEKLMALVDTSINIECKATGTPPPQINWLKNGLPLPISSHIRLLSAGQVVRIVRAQVSDIAVYTCVASNRAGVDSKHYSLQVFVPPNMDNAMGTEEITIVKGSSTSMTCFTDGTPAPSMSWLRDGQPLAPDAHLTVSTQGMVLQLIKAETEDTGKYTCVATNEAGEVSKHFVLKVLEPPHINGSEGPGEVSVIVNNPLELSCIASGIPAPKISWMKDGRPFLQTEQVQTLEGGAILRVSSAQVEDTGRYTCLASSPAGDDDKEYLVRVHVPPNIAGMDEAQDFTVLRNRQVTLECKSDAVPPPVIMWLKNREQLQATPRVRILSGGRYLQINNADLGDTANYTCVASNIAGKTTREFNLTVNVPPSIGGGPQSLVTLLNKSIALECRAEGVPAPRITWRKDGVVLAESHARYSILENGFLHIESAHVTDTGRYLCMATNVAGTDRRRIDLQVHVPPSIAMGPTNVTVTVNVQTTLACEATGIPKPSVTWRKNGHLLNVDQNQNSYRLLSSGSLVIISPSVDDTASYECTVTSDAGEDKRAVDLTVQVPPTIADEPMDFLVTRQAPAVMTCSASGVPVPSIHWTKNGLRLLPRGDGYRILSSGAIEIPTTQLNHAGRYTCVARNAAGSAHRHVTLRVQEPPVIQPQPSELDVILNNPILLPCEATGIPTPFITWQKEGINVITSGKSLAILPSGSLQISRAVRGDAGTYMCVAQNPAGTALGKVKLNVQVPPVISSHQKEYVVTMDKPVSLLCETEGSPPPDITWHKDGHALTESIRQRILNSGALQIAFAQPDDAGQYTCMAANMAGSSSVSSTLTVHVPPRIQSTEVHFTVNENSQAVLPCVADGIPTPAIHWEKDGVLIANLLGKYTAQPYGELILENVVLEDSGTYTCVANNAAGEDTRIVTLAVHTLPTFTELPGDLSLNKGEQLRLSCKAVGIPLPKLTWTFNNNIIPAHFDSINGHSELVIEKVSKEDSGTYVCTAENSVGFVKAIGFVYVKEPPVFKGDYPSNWIEPLGGNAILNCEVKGDPAPTIQWSRKGADIEISHRIRQLGNGSLAIYGTVNEDAGDYTCVAANEAGMVERSMSLTLQSSPIITLEPVETVVDAGGRVILDCQAAGEPQPTITWSRQGQPISWDNRLSMLPNSSLYIAAARKEDTSEYECVARNLMGSVLVRVPVIVQVHGGFSLWSAWRPCSVTCGKGIQKRSRLCDNPPPANGGRPCQGADSEARHCHNKLCPVDGHWSEWSFWEDCSRSCGHGNQTRTRTCSNPPAQHGGRPCEGHAVETIMCNIRPCPVHGVWNAWQPWSACSKSCGKGSQTRMRLCNNPPPSFGGAHCSGAETQMQVCNERHCPVDGRWATWSSWSACTVSCGGGARKRTRDCSDPVPQYGGNKCEGTGVQSDFCNSDPCPTHGNWSPWSGWGTCSRTCNGGQMRRYRTCDNPRPSNGGRACGGPDTQIQRCNTDMCPVDGSWGTWHSWSHCSVSCGGGERTRKRLCDNPVPTKGGRSCPGDATQVSRCNMQACPGGPQRARGSVIGNINDIEFGIAFLNATITDSPNTDTRVIQAKITNVPRSLGPAMRKIISILNPIYWTTAKEIGEAVNGFTLTNAVFKRETQVEFATGEVLRMTHVARGLDSDGALLLDVIVSGQVLQLHSPAEVGVKDYTEDYIQTGPGQLYAYSTRLFTIDGISIPYTWNHTIFYDQAWGKMPFLVETLHASSIESDYNQLEETLGFKIHASISKGDRSNQCPSGFILDSVGPFCADEDECTAGNPCSHTCHNAIGAYYCSCPKGLTIAADGRTCQDIDECALGGHTCRAGQDCDNTIGSYRCVVHCGTGFRRTSDGLSCQDINECQESSPCHQRCFNVIGSFHCGCEAGYQLKGRKCIDVNECRQNVCRPDQHCKNTRGGYKCIDLCPSGMTKAENGTCIDIDECKDGTHQCRYNQICENTRGSYRCACPRGYRSQGVGRPCIDINECEQVPKPCAHQCSNSPGSFKCICLPGQQLLGDGKSCAGLERLSNYGTQYSSYTLERFSPVRSDYQPSQHYRQYSQLYSSYSEYRNSRASFSRNRRTIRKTCPEGSEANHETCVDIDECQNRDTCQHECKNTIGSYQCVCPPGYRLMLNGKTCQDVDECLEQNVRCGPNRMCFNMRGSYQCIDTPCPPNYQRDPVLGFCLKNCPPNDLECTLSPYALEYKLVSLPFGIAANQDLIRLVAYTQDGVMHPRTTFLMIDEEPAVPFALRDENLKGVVYTTRPLREAETYRMKVGALSYSANGTIEYQTTFIVYIAVSAYPY.

The signal sequence occupies residues 1 to 21 (MIAQEVVHTVFLVALFRSSLA). Positions 41–216 (TLAFVFDVTG…EVLKWVEEAV (176 aa)) constitute a VWFA domain. Ig-like C2-type domains are found at residues 431–517 (PKVT…FDVS), 520–607 (PPII…VFLT), 612–697 (PKVT…STLR), 702–788 (PKLV…LTLD), 793–883 (PVFI…TTVT), 890–976 (PLIG…TSVA), 981–1067 (PSIQ…VQLT), 1072–1166 (PRVF…VKLS), 1171–1254 (PKIQ…AEVT), 1261–1353 (PSVE…YNLK), 1357–1446 (PPVI…FSVN), 1451–1540 (PSIL…IKLT), 1545–1633 (PSIK…FHVD), 1638–1723 (PTIE…REIK), 1732–1820 (PAVE…FEVT), 1825–1913 (PTIK…TQLH), 1918–2006 (PSLD…YSLQ), 2011–2096 (PSIS…RDID), 2103–2189 (PNIM…YNVN), 2194–2284 (PSIY…YNLQ), 2289–2378 (PSIT…YDLS), 2383–2472 (PSII…FGLS), 2477–2565 (PHIV…FRLN), 2570–2661 (PTIA…YEVK), 2665–2762 (PPII…VNIQ), 2765–2863 (PSFQ…YDVH), 2867–2958 (PPVI…FNLN), 2962–3050 (PPSV…VSLT), and 3055–3145 (PSIK…FHLN). 2 cysteine pairs are disulfide-bonded: Cys451-Cys499 and Cys541-Cys591. Residue Thr615 is glycosylated (O-linked (GalNAc...) threonine). Cystine bridges form between Cys633/Cys681, Cys723/Cys772, Cys814/Cys867, Cys911/Cys960, Cys1002/Cys1051, Cys1101/Cys1150, Cys1192/Cys1240, Cys1287/Cys1337, Cys1381/Cys1430, Cys1474/Cys1524, and Cys1568/Cys1617. O-linked (GalNAc...) threonine glycosylation is found at Thr1292 and Thr1386. A glycan (O-linked (GalNAc...) threonine) is linked at Thr1639. Intrachain disulfides connect Cys1662-Cys1711 and Cys1755-Cys1804. The O-linked (GalNAc...) threonine glycan is linked to Thr1826. Intrachain disulfides connect Cys1847–Cys1897, Cys1941–Cys1990, Cys2032–Cys2082, Cys2124–Cys2173, Cys2217–Cys2268, Cys2313–Cys2362, Cys2407–Cys2456, Cys2500–Cys2549, Cys2596–Cys2645, Cys2695–Cys2744, Cys2798–Cys2847, Cys2893–Cys2942, Cys2985–Cys3034, and Cys3080–Cys3129. Thr3151 carries an O-linked (GalNAc...) threonine glycan. Ig-like C2-type domains are found at residues 3155–3227 (PETE…VASN), 3244–3334 (PSVA…FNLN), 3339–3428 (PKIR…YSLQ), 3433–3515 (PNMD…GEVS), 3526–3614 (PHIN…YLVR), 3619–3707 (PNIA…FNLT), 3712–3798 (PSIG…IDLQ), 3803–3891 (PSIA…VDLT), 3896–3982 (PTIA…VTLR), 3987–4073 (PVIQ…VKLN), 4077–4163 (PPVI…STLT), 4168–4252 (PRIQ…RIVT), 4259–4332 (PTFT…AENS), 4347–4434 (PPVF…MSLT), and 4439–4526 (PIIT…VIVQ). 8 disulfides stabilise this stretch: Cys3172–Cys3223, Cys3267–Cys3318, Cys3363–Cys3412, Cys3456–Cys3505, Cys3549–Cys3598, Cys3642–Cys3691, Cys3733–Cys3782, and Cys3824–Cys3875. An O-linked (GalNAc...) threonine glycan is attached at Thr3897. 25 cysteine pairs are disulfide-bonded: Cys3917-Cys3966, Cys4008-Cys4057, Cys4099-Cys4147, Cys4189-Cys4238, Cys4280-Cys4327, Cys4370-Cys4418, Cys4460-Cys4508, Cys4540-Cys4577, Cys4544-Cys4582, Cys4555-Cys4567, Cys4597-Cys4634, Cys4601-Cys4639, Cys4612-Cys4624, Cys4654-Cys4691, Cys4658-Cys4696, Cys4669-Cys4681, Cys4711-Cys4748, Cys4715-Cys4753, Cys4726-Cys4738, Cys4768-Cys4805, Cys4772-Cys4810, Cys4783-Cys4795, Cys4825-Cys4862, Cys4829-Cys4867, and Cys4840-Cys4852. The O-linked (GalNAc...) threonine glycan is linked to Thr4379. TSP type-1 domains are found at residues 4528–4583 (HGGF…KLCP), 4585–4640 (DGHW…RPCP), 4642–4697 (HGVW…RHCP), 4699–4754 (DGRW…DPCP), 4756–4811 (HGNW…DMCP), and 4813–4868 (DGSW…QACP). The Nidogen G2 beta-barrel domain occupies 4870-5092 (GPQRARGSVI…SKGDRSNQCP (223 aa)). One can recognise an EGF-like 1; calcium-binding domain in the interval 5106-5145 (DEDECTAGNPCSHTCHNAIGAYYCSCPKGLTIAADGRTCQ). 3 disulfides stabilise this stretch: Cys5110/Cys5120, Cys5116/Cys5129, and Cys5131/Cys5144. In terms of domain architecture, EGF-like 2; calcium-binding spans 5146-5189 (DIDECALGGHTCRAGQDCDNTIGSYRCVVHCGTGFRRTSDGLSC). The EGF-like 3; calcium-binding domain maps to 5191 to 5228 (DINECQESSPCHQRCFNVIGSFHCGCEAGYQLKGRKCI). 3 disulfide bridges follow: Cys5195–Cys5205, Cys5201–Cys5214, and Cys5216–Cys5227. Residues 5229–5269 (DVNECRQNVCRPDQHCKNTRGGYKCIDLCPSGMTKAENGTC) form the EGF-like 4; calcium-binding domain. In terms of domain architecture, EGF-like 5; calcium-binding spans 5271–5306 (DIDECKDGTHQCRYNQICENTRGSYRCACPRGYRSQ). Intrachain disulfides connect Cys5275/Cys5288, Cys5282/Cys5297, Cys5318/Cys5329, Cys5325/Cys5338, Cys5340/Cys5353, Cys5435/Cys5445, Cys5441/Cys5454, and Cys5456/Cys5469. An EGF-like 6; calcium-binding domain is found at 5314 to 5354 (DINECEQVPKPCAHQCSNSPGSFKCICLPGQQLLGDGKSCA). The EGF-like 7; calcium-binding domain maps to 5431-5470 (DIDECQNRDTCQHECKNTIGSYQCVCPPGYRLMLNGKTCQ).

In the kidney, expressed in the glomerulus (at protein level). Expressed in whisker and hair follicles, eye, tongue, and splenic and lymph node conduits (at protein level). In the embryo, localizes to the cleavage furrow at the two-cell stage (at protein level). In neonatal skin, expressed throughout the dermis (at protein level). In adult skin, strongly concentrated at the dermal side of the basement membrane but not detectable in the deeper dermis. Shows tendon-specific localization at the myotendinous junction and is also detected in the perichondrium (at protein level). Expressed by chondrocytes residing in articular cartilage and the femoral growth plate of 52 week old mice (at protein level). Expressed in vascular endothelial cells in coronary arteries and sparsely in endocardial endothelium (at protein level). Expressed in skin, tongue, lung and eye. At 14.5 dpc, expressed in the vibrissae, dermis, forelimb, kidney, intestine, lung and iliac cartilage where expression is found mainly in mesenchymal cells.

It is found in the secreted. It localises to the extracellular space. The protein localises to the extracellular matrix. Its subcellular location is the basement membrane. The protein resides in the cytoplasm. It is found in the cell junction. It localises to the cleavage furrow. In terms of biological role, involved in transforming growth factor beta-mediated rearrangement of the podocyte cytoskeleton which includes reduction of F-actin fibers and broadening, flattening and elongation of podocytes. Plays a role in basement membrane organization. May promote cleavage furrow maturation during cytokinesis in preimplantation embryos. May play a role in the architecture of adhesive and flexible epithelial cell junctions. May play a role during myocardial remodeling by imparting an effect on cardiac fibroblast migration. The polypeptide is Hemicentin-1 (Mus musculus (Mouse)).